Here is a 34-residue protein sequence, read N- to C-terminus: Potassium channel toxin alpha-KTx 6.3 (34 aa).

Cystine bridges form between C3/C24, C9/C29, C13/C31, and C19/C34. C34 is modified (cysteine amide).

This sequence belongs to the short scorpion toxin superfamily. Potassium channel inhibitor family. Alpha-KTx 06 subfamily. Amidated. The amidated toxin shows 5-fold more affinity for Kv1.3/KCNA3 than the synthetic carboxylated form. Expressed by the venom gland.

The protein resides in the secreted. Functionally, potently blocks voltage-gated potassium channels Kv1.1/KCNA1 (IC(50)=7-11 nM) and Kv1.3/KCNA3 (IC(50)=11-29 pM). Also mildly blocks intermediate (IK) conductance calcium-activated potassium channels (KCa3.1/KCNN4) and ERG1/Kv11.1/KCNH2. Shows ability to suppress proliferation of lymphocytes, which are known to be sensitive to Kv1.3/KCNA3 homotetrameric channel block. This Heterometrus spinifer (Asia giant forest scorpion) protein is Potassium channel toxin alpha-KTx 6.3.